The following is a 142-amino-acid chain: Large ribosomal subunit protein uL16 (142 aa).

This sequence belongs to the universal ribosomal protein uL16 family. As to quaternary structure, part of the 50S ribosomal subunit.

Functionally, binds 23S rRNA and is also seen to make contacts with the A and possibly P site tRNAs. The chain is Large ribosomal subunit protein uL16 from Thermotoga neapolitana (strain ATCC 49049 / DSM 4359 / NBRC 107923 / NS-E).